The following is a 382-amino-acid chain: Lipid-A-disaccharide synthase (382 aa).

It belongs to the LpxB family.

It catalyses the reaction 2-N,3-O-bis[(3R)-3-hydroxytetradecanoyl]-alpha-D-glucosaminyl 1-phosphate + UDP-2-N,3-O-bis[(3R)-3-hydroxytetradecanoyl]-alpha-D-glucosamine = lipid A disaccharide (E. coli) + UDP + H(+). It carries out the reaction a lipid X + a UDP-2-N,3-O-bis[(3R)-3-hydroxyacyl]-alpha-D-glucosamine = a lipid A disaccharide + UDP + H(+). It participates in glycolipid biosynthesis; lipid IV(A) biosynthesis; lipid IV(A) from (3R)-3-hydroxytetradecanoyl-[acyl-carrier-protein] and UDP-N-acetyl-alpha-D-glucosamine: step 5/6. Its function is as follows. Condensation of UDP-2,3-diacylglucosamine and 2,3-diacylglucosamine-1-phosphate to form lipid A disaccharide, a precursor of lipid A, a phosphorylated glycolipid that anchors the lipopolysaccharide to the outer membrane of the cell. The polypeptide is Lipid-A-disaccharide synthase (Salmonella heidelberg (strain SL476)).